A 406-amino-acid polypeptide reads, in one-letter code: Pyruvate dehydrogenase E1 component subunit beta-2, chloroplastic (406 aa).

The transit peptide at 1–44 directs the protein to the chloroplast; it reads MSSIIHGAGAATTTLSTFNSVDSKKLFVAPSRTNLSVRSQRYIV. Glutamate 142 serves as a coordination point for thiamine diphosphate. Residues valine 195, alanine 243, isoleucine 244, and asparagine 248 each coordinate K(+).

Tetramer of 2 alpha and 2 beta subunits. Thiamine diphosphate serves as cofactor.

It is found in the plastid. The protein resides in the chloroplast. It carries out the reaction N(6)-[(R)-lipoyl]-L-lysyl-[protein] + pyruvate + H(+) = N(6)-[(R)-S(8)-acetyldihydrolipoyl]-L-lysyl-[protein] + CO2. Functionally, the pyruvate dehydrogenase complex catalyzes the overall conversion of pyruvate to acetyl-CoA and CO(2). It contains multiple copies of three enzymatic components: pyruvate dehydrogenase (E1), dihydrolipoamide acetyltransferase (E2) and lipoamide dehydrogenase (E3). The chain is Pyruvate dehydrogenase E1 component subunit beta-2, chloroplastic (PDH-E1 BETA) from Arabidopsis thaliana (Mouse-ear cress).